Here is a 445-residue protein sequence, read N- to C-terminus: Anaerobilin synthase (445 aa).

Residues 52-287 form the Radical SAM core domain; sequence TASPRKRLVY…LQGCDFMDDA (236 aa). Position 61 (Tyr-61) interacts with S-adenosyl-L-methionine. The [4Fe-4S] cluster site is built by Cys-67 and Cys-71. Position 73 (Phe-73) interacts with S-adenosyl-L-methionine. Residue Cys-74 coordinates [4Fe-4S] cluster. Residues Gly-118, 119–120, Glu-151, Gln-178, Arg-190, and Asp-215 each bind S-adenosyl-L-methionine; that span reads GT.

It belongs to the anaerobic coproporphyrinogen-III oxidase family. ChuW/HutW subfamily. [4Fe-4S] cluster is required as a cofactor.

It catalyses the reaction 2 reduced [flavodoxin] + heme b + 2 S-adenosyl-L-methionine = anaerobilin + 2 oxidized [flavodoxin] + Fe(2+) + 5'-deoxyadenosine + L-methionine + S-adenosyl-L-homocysteine. With respect to regulation, inhibited by exposure to molecular oxygen. Functionally, involved in heme degradation and iron utilization under anaerobic conditions. Catalyzes a radical-mediated mechanism facilitating iron liberation and the production of the tetrapyrrole product anaerobilin. Can use heme, mesoheme and deuteroheme as substrates. This Escherichia coli O157:H7 protein is Anaerobilin synthase.